A 562-amino-acid polypeptide reads, in one-letter code: Tetratricopeptide repeat protein 39A (562 aa).

TPR repeat units follow at residues 273–306, 463–496, and 504–537; these read AIFL…QQNW, CVVK…EKRI, and PNAM…YKNY.

The protein belongs to the TTC39 family.

The sequence is that of Tetratricopeptide repeat protein 39A (ttc39a) from Xenopus tropicalis (Western clawed frog).